The sequence spans 421 residues: MRRHSSKSGVALPPVGQGPDACQMLTRAQLGQDPPQRTVLGVLTENEQYRRACGQEIATIRCFSGSENVFPAAGKKVLPDNGVSEPAKHGFDIYMDDPEQGDRDSCPGREGIVFEDVYEVDTSMLKSDLHFLLDFNTVSPMLVDSTAHAQSEEATDFGSDVINVTEYAEEIHRYLREAEVRHRPKAHYMRKQPDITEGMRAILVDWLVEVGEEYKLRTETLYLAVNFLDRFLSCMSVLRGKLQLVGTAAILLASKYEEIYPPDVDEFVYITDDTYTKRQLLRMEHLLLKVLAFDLTVPTTNQFLLQYLRRQGVCIRTENLAKYVAELSLLEADPFLKYLPSLVAAAAYCLANYIVNRHFWPETLAAFTGYSLNEIVPCLSELHKACLSIPHRPQQAIREKYKASKYLHVSLMEPPVVLPLQ.

Positions 1-20 are disordered; the sequence is MRRHSSKSGVALPPVGQGPD.

It belongs to the cyclin family. Cyclin AB subfamily. Interacts with the CDK2 and the CDC2 protein kinases to form a serine/threonine kinase holoenzyme complex. The cyclin subunit imparts substrate specificity to the complex. Does not bind CDK4 and CDK5 (in vitro). The cyclin A1-CDK2 complex interacts with transcription factor E2F-1 and RB proteins. Found in a complex with CDK2, CABLES1 and CCNE1. Interacts with INCA1 and KLHDC9. Post-translationally, polyubiquitinated via 'Lys-11'-linked ubiquitin by the anaphase-promoting complex (APC/C), leading to its degradation by the proteasome. Deubiquitinated and stabilized by USP37 enables entry into S phase. Ubiquitinated during the G1 phase by the SCF(FBXO31) complex, leading to its proteasomal degradation.

The protein localises to the nucleus. In terms of biological role, may be involved in the control of the cell cycle at the G1/S (start) and G2/M (mitosis) transitions. May primarily function in the control of the germline meiotic cell cycle and additionally in the control of mitotic cell cycle in some somatic cells. The protein is Cyclin-A1 (Ccna1) of Rattus norvegicus (Rat).